Consider the following 636-residue polypeptide: MSSISIALPDGSKREIASGSTIADLAASIGAGLAKAAIAGKLDGELVDLSTELKDDSRVEIITEKSPEALTVIRHSAAHLMAQAVKELFPQAKVTIGPAIESGFYYDFDMDAPFTPEDLERIEARMAELAAANQKIERRVLSSSEAVSLFSGMGENYKVELINDLAAETVSVYSQGDFADLCRGPHLPSTSRIKAFKLLSIAGAYWRGDEKNRMLQRIYGTAFADKKELEAYLHRLEESKRRDHRRLGRELDLFSFSDEVGAGLVIWHPKGAMLRTILEDFERREHLKRGYDIVLGPQILKKELWQRSGHYENYRENMYFTEVDEQSYGIKPMNCLAHMMIYKSHLRSYRDLPLRYFELGTVHRHERAGVLHGLLRVRGFTQDDAHILCAPEQLDGEIKGVLKFVSDVMAIFGFEYEMELSTRPEKSIGDDAAWELATEALLSALKDTGRSFEINEGDGAFYGPKIDIKLKDALDRRWQCATIQCDFTLPERFDLQYVAADGEKKRPVMVHRVVLGAIERFIGVLIEHYAGNFPLWLSPVQAMLVTVTDNHIPYAQGVLEHLREAGIRVQGDFRNEKLSFKIREAQLQKVPYMLVIGDKEMESATVTPRFRDGKNLVAMKPEDFVAFVVEETKNFR.

A TGS domain is found at 1–63 (MSSISIALPD…KDDSRVEIIT (63 aa)). The tract at residues 243 to 534 (DHRRLGRELD…LIEHYAGNFP (292 aa)) is catalytic. Residues Cys-335, His-386, and His-511 each contribute to the Zn(2+) site.

It belongs to the class-II aminoacyl-tRNA synthetase family. In terms of assembly, homodimer. Requires Zn(2+) as cofactor.

It is found in the cytoplasm. It carries out the reaction tRNA(Thr) + L-threonine + ATP = L-threonyl-tRNA(Thr) + AMP + diphosphate + H(+). Catalyzes the attachment of threonine to tRNA(Thr) in a two-step reaction: L-threonine is first activated by ATP to form Thr-AMP and then transferred to the acceptor end of tRNA(Thr). Also edits incorrectly charged L-seryl-tRNA(Thr). The polypeptide is Threonine--tRNA ligase (Pelobacter propionicus (strain DSM 2379 / NBRC 103807 / OttBd1)).